Consider the following 253-residue polypeptide: 5'-nucleotidase SurE (253 aa).

Aspartate 8, aspartate 9, serine 39, and asparagine 92 together coordinate a divalent metal cation.

Belongs to the SurE nucleotidase family. A divalent metal cation serves as cofactor.

The protein resides in the cytoplasm. The catalysed reaction is a ribonucleoside 5'-phosphate + H2O = a ribonucleoside + phosphate. Its function is as follows. Nucleotidase that shows phosphatase activity on nucleoside 5'-monophosphates. The protein is 5'-nucleotidase SurE of Burkholderia vietnamiensis (strain G4 / LMG 22486) (Burkholderia cepacia (strain R1808)).